The sequence spans 616 residues: UvrABC system protein C (616 aa).

In terms of domain architecture, GIY-YIG spans 12–97 (NDAGVYQYFD…IKQLKPKYNI (86 aa)). A UVR domain is found at 203–238 (TKLISKLNEKMLQYSNDFRFEEAMTLRDRIKTIEKS).

This sequence belongs to the UvrC family. Interacts with UvrB in an incision complex.

The protein localises to the cytoplasm. Its function is as follows. The UvrABC repair system catalyzes the recognition and processing of DNA lesions. UvrC both incises the 5' and 3' sides of the lesion. The N-terminal half is responsible for the 3' incision and the C-terminal half is responsible for the 5' incision. In Aliarcobacter butzleri (strain RM4018) (Arcobacter butzleri), this protein is UvrABC system protein C.